The primary structure comprises 367 residues: Outer membrane porin C (367 aa).

Residues 1 to 21 form the signal peptide; it reads MKVKVLSLLVPALLVAGAANA.

This sequence belongs to the Gram-negative porin family. Homotrimer.

The protein localises to the cell outer membrane. Its function is as follows. Forms pores that allow passive diffusion of small molecules across the outer membrane. The chain is Outer membrane porin C (ompC) from Escherichia coli O157:H7.